The primary structure comprises 355 residues: Olfactory receptor 1I1 (355 aa).

Residues M1 to T25 are Extracellular-facing. Residues L26–I49 traverse the membrane as a helical segment. Over I50–T57 the chain is Cytoplasmic. A helical membrane pass occupies residues P58 to P79. Residues K80–Q100 are Extracellular-facing. Residues M101–I120 form a helical membrane-spanning segment. Residues D121–P139 are Cytoplasmic-facing. The helical transmembrane segment at V140–I158 threads the bilayer. Residues H159–N195 are Extracellular-facing. Residues E196–I219 form a helical membrane-spanning segment. Residues R220–K236 lie on the Cytoplasmic side of the membrane. A helical membrane pass occupies residues A237–Y259. Residues L260–K272 are Extracellular-facing. A helical transmembrane segment spans residues A273–I292. Residues R293 to E355 are Cytoplasmic-facing.

This sequence belongs to the G-protein coupled receptor 1 family.

The protein resides in the cell membrane. Odorant receptor. The polypeptide is Olfactory receptor 1I1 (OR1I1) (Homo sapiens (Human)).